We begin with the raw amino-acid sequence, 213 residues long: 3,4-dihydroxy-2-butanone 4-phosphate synthase (213 aa).

Residues 37 to 38, Asp-42, 150 to 154, and Glu-174 each bind D-ribulose 5-phosphate; these read RE and RSGHT. Glu-38 is a binding site for Mg(2+). His-153 contributes to the Mg(2+) binding site.

This sequence belongs to the DHBP synthase family. As to quaternary structure, homodimer. Requires Mg(2+) as cofactor. The cofactor is Mn(2+).

It carries out the reaction D-ribulose 5-phosphate = (2S)-2-hydroxy-3-oxobutyl phosphate + formate + H(+). It participates in cofactor biosynthesis; riboflavin biosynthesis; 2-hydroxy-3-oxobutyl phosphate from D-ribulose 5-phosphate: step 1/1. Catalyzes the conversion of D-ribulose 5-phosphate to formate and 3,4-dihydroxy-2-butanone 4-phosphate. This Blochmanniella floridana protein is 3,4-dihydroxy-2-butanone 4-phosphate synthase.